The following is a 519-amino-acid chain: Exodeoxyribonuclease 7 large subunit (519 aa).

The tract at residues 500 to 519 (VGRGKTRKPKEEPPAQGSLL) is disordered.

This sequence belongs to the XseA family. Heterooligomer composed of large and small subunits.

It localises to the cytoplasm. The enzyme catalyses Exonucleolytic cleavage in either 5'- to 3'- or 3'- to 5'-direction to yield nucleoside 5'-phosphates.. Its function is as follows. Bidirectionally degrades single-stranded DNA into large acid-insoluble oligonucleotides, which are then degraded further into small acid-soluble oligonucleotides. The sequence is that of Exodeoxyribonuclease 7 large subunit from Cereibacter sphaeroides (strain ATCC 17023 / DSM 158 / JCM 6121 / CCUG 31486 / LMG 2827 / NBRC 12203 / NCIMB 8253 / ATH 2.4.1.) (Rhodobacter sphaeroides).